The following is a 339-amino-acid chain: MKIFEAYTIKNMCLKNRIVMPPMCMYSSDNTGNINDFHLVHYTTRSIGGVGFIIVEATGITPNGRISDKDLGIWSEKHAEGLSFLVKEVKKYGSKIAIQLNHSGRKYEGTSGEPVAPSALAFDENSKTPKELTKNEIKEIILAFKAAAKRAEKAGFDAIEIHGAHGYLINQFLSPLSNFRDDEYGGSTENRTRFLKEVLEAVREVWPKEKPILLRVSAEDYRGGSGITPNEMVNIINIVKDLIDVVDVSSGGVAPAHINLYPGYQVKLSEVIKNECNVPTIAVGLICDINMVEEILSNNRADLVALGRELLRNPYFVLSSARLKNINIDFPKPYERAFN.

21-24 is an FMN binding site; that stretch reads PPMC. Tyrosine 26 contacts substrate. Positions 57 and 99 each coordinate FMN. Position 162–165 (162–165) interacts with substrate; the sequence is HGAH. Residues arginine 215 and 307 to 308 contribute to the FMN site; that span reads GR.

It belongs to the NADH:flavin oxidoreductase/NADH oxidase family. NamA subfamily. In terms of assembly, homotetramer. It depends on FMN as a cofactor.

It catalyses the reaction A + NADPH + H(+) = AH2 + NADP(+). Functionally, catalyzes the reduction of the double bond of an array of alpha,beta-unsaturated aldehydes and ketones. It also reduces the nitro group of nitroester and nitroaromatic compounds. It could have a role in detoxification processes. This chain is NADPH dehydrogenase, found in Clostridium acetobutylicum (strain ATCC 824 / DSM 792 / JCM 1419 / IAM 19013 / LMG 5710 / NBRC 13948 / NRRL B-527 / VKM B-1787 / 2291 / W).